Reading from the N-terminus, the 152-residue chain is Ribonuclease H (152 aa).

One can recognise an RNase H type-1 domain in the interval 1–142 (MNSKVVIYTD…ADKLAVQGRE (142 aa)). Residues aspartate 10, glutamate 48, aspartate 70, and aspartate 134 each contribute to the Mg(2+) site.

Belongs to the RNase H family. Monomer. It depends on Mg(2+) as a cofactor.

It localises to the cytoplasm. It catalyses the reaction Endonucleolytic cleavage to 5'-phosphomonoester.. Functionally, endonuclease that specifically degrades the RNA of RNA-DNA hybrids. The chain is Ribonuclease H from Rickettsia akari (strain Hartford).